The sequence spans 270 residues: Plasmanylethanolamine desaturase 1 (270 aa).

The next 3 helical transmembrane spans lie at 47–67 (WCSVILCFSLIAHNLVHLLLL), 74–94 (PLVILGVVAGALIADFLSGLV), and 161–181 (ALEQLYPWECFVFCLIIFGTF). The short motif at 186–190 (HKWSH) is the Histidine box-1 element. The Histidine box-2 motif lies at 213 to 217 (HHRIH).

Belongs to the fatty acid desaturase CarF family.

The protein localises to the endoplasmic reticulum membrane. It catalyses the reaction a 1-(1,2-saturated alkyl)-2-acyl-sn-glycero-3-phosphoethanolamine + 2 Fe(II)-[cytochrome b5] + O2 + 2 H(+) = a 1-O-(1Z-alkenyl)-2-acyl-sn-glycero-3-phosphoethanolamine + 2 Fe(III)-[cytochrome b5] + 2 H2O. It carries out the reaction a 1-O-hexadecyl-2-acyl-sn-glycero-3-phosphoethanolamine + 2 Fe(II)-[cytochrome b5] + O2 + 2 H(+) = a 1-O-(1Z-hexadecenyl)-2-acyl-sn-glycero-3-phosphoethanolamine + 2 Fe(III)-[cytochrome b5] + 2 H2O. The enzyme catalyses a 1-O-octadecyl-2-acyl-sn-glycero-3-phosphoethanolamine + 2 Fe(II)-[cytochrome b5] + O2 + 2 H(+) = a 1-O-(1Z-octadecenyl)-2-acyl-sn-glycero-3-phosphoethanolamine + 2 Fe(III)-[cytochrome b5] + 2 H2O. The catalysed reaction is a 1-O-(9Z-octadecenyl)-2-acyl-sn-glycero-3-phosphoethanolamine + 2 Fe(II)-[cytochrome b5] + O2 + 2 H(+) = a 1-O-(1Z,9Z-octadecadienyl)-2-acyl-sn-glycero-3-phosphoethanolamine + 2 Fe(III)-[cytochrome b5] + 2 H2O. It functions in the pathway lipid metabolism; fatty acid metabolism. Plasmanylethanolamine desaturase involved in plasmalogen biogenesis in the endoplasmic reticulum membrane. Plasmalogens are glycerophospholipids with a hydrocarbon chain linked by a vinyl ether bond at the glycerol sn-1 position, and are involved in antioxidative and signaling mechanisms. This Homo sapiens (Human) protein is Plasmanylethanolamine desaturase 1.